A 154-amino-acid chain; its full sequence is Prefoldin subunit 5 (154 aa).

The residue at position 2 (Ala-2) is an N-acetylalanine. At Lys-42 the chain carries N6-acetyllysine. Residue Ser-56 is modified to Phosphoserine.

This sequence belongs to the prefoldin subunit alpha family. As to quaternary structure, heterohexamer of two PFD-alpha type and four PFD-beta type subunits.

It is found in the nucleus. Its function is as follows. Binds specifically to cytosolic chaperonin (c-CPN) and transfers target proteins to it. Binds to nascent polypeptide chain and promotes folding in an environment in which there are many competing pathways for nonnative proteins. Represses the transcriptional activity of MYC. The chain is Prefoldin subunit 5 (Pfdn5) from Mus musculus (Mouse).